The following is a 176-amino-acid chain: Nudix hydrolase 18, mitochondrial (176 aa).

Residues Met-1–Gln-21 constitute a mitochondrion transit peptide. Positions Val-22–Val-153 constitute a Nudix hydrolase domain. The Nudix box motif lies at Gly-60–Gly-81. 2 residues coordinate Mg(2+): Glu-75 and Glu-79.

It belongs to the Nudix hydrolase family. Requires Mg(2+) as cofactor. Mn(2+) is required as a cofactor. As to expression, expressed in roots, stems and inflorescences.

The protein localises to the mitochondrion. Functionally, probably mediates the hydrolysis of some nucleoside diphosphate derivatives. This is Nudix hydrolase 18, mitochondrial (NUDT18) from Arabidopsis thaliana (Mouse-ear cress).